The following is a 266-amino-acid chain: Elongator complex protein 6 (266 aa).

This sequence belongs to the ELP6 family. As to quaternary structure, component of the elongator complex which consists of ELP1, ELP2, ELP3, ELP4, ELP5 and ELP6.

It is found in the cytoplasm. The protein resides in the nucleus. The protein operates within tRNA modification; 5-methoxycarbonylmethyl-2-thiouridine-tRNA biosynthesis. Component of the elongator complex which is required for multiple tRNA modifications, including mcm5U (5-methoxycarbonylmethyl uridine), mcm5s2U (5-methoxycarbonylmethyl-2-thiouridine), and ncm5U (5-carbamoylmethyl uridine). The elongator complex catalyzes formation of carboxymethyluridine in the wobble base at position 34 in tRNAs. Involved in cell migration. The chain is Elongator complex protein 6 from Homo sapiens (Human).